The sequence spans 274 residues: Undecaprenyl-diphosphatase (274 aa).

A run of 6 helical transmembrane segments spans residues A44–W64, L85–I105, L109–A129, A185–L205, A215–V235, and F250–V270.

The protein belongs to the UppP family.

Its subcellular location is the cell inner membrane. It catalyses the reaction di-trans,octa-cis-undecaprenyl diphosphate + H2O = di-trans,octa-cis-undecaprenyl phosphate + phosphate + H(+). Catalyzes the dephosphorylation of undecaprenyl diphosphate (UPP). Confers resistance to bacitracin. In Acidovorax ebreus (strain TPSY) (Diaphorobacter sp. (strain TPSY)), this protein is Undecaprenyl-diphosphatase.